The sequence spans 402 residues: 4-hydroxy-3-methylbut-2-enyl diphosphate reductase (402 aa).

Cysteine 66 serves as a coordination point for [4Fe-4S] cluster. Residue histidine 96 coordinates (2E)-4-hydroxy-3-methylbut-2-enyl diphosphate. Histidine 96 contacts dimethylallyl diphosphate. Histidine 96 contacts isopentenyl diphosphate. Cysteine 157 is a binding site for [4Fe-4S] cluster. Histidine 185 contacts (2E)-4-hydroxy-3-methylbut-2-enyl diphosphate. Histidine 185 lines the dimethylallyl diphosphate pocket. Histidine 185 is an isopentenyl diphosphate binding site. Glutamate 187 serves as the catalytic Proton donor. Threonine 250 serves as a coordination point for (2E)-4-hydroxy-3-methylbut-2-enyl diphosphate. Cysteine 288 serves as a coordination point for [4Fe-4S] cluster. Positions 317, 318, 319, and 379 each coordinate (2E)-4-hydroxy-3-methylbut-2-enyl diphosphate. Dimethylallyl diphosphate is bound by residues serine 317, serine 318, asparagine 319, and serine 379. Residues serine 317, serine 318, asparagine 319, and serine 379 each contribute to the isopentenyl diphosphate site.

This sequence belongs to the IspH family. [4Fe-4S] cluster serves as cofactor.

The catalysed reaction is isopentenyl diphosphate + 2 oxidized [2Fe-2S]-[ferredoxin] + H2O = (2E)-4-hydroxy-3-methylbut-2-enyl diphosphate + 2 reduced [2Fe-2S]-[ferredoxin] + 2 H(+). It catalyses the reaction dimethylallyl diphosphate + 2 oxidized [2Fe-2S]-[ferredoxin] + H2O = (2E)-4-hydroxy-3-methylbut-2-enyl diphosphate + 2 reduced [2Fe-2S]-[ferredoxin] + 2 H(+). It participates in isoprenoid biosynthesis; dimethylallyl diphosphate biosynthesis; dimethylallyl diphosphate from (2E)-4-hydroxy-3-methylbutenyl diphosphate: step 1/1. It functions in the pathway isoprenoid biosynthesis; isopentenyl diphosphate biosynthesis via DXP pathway; isopentenyl diphosphate from 1-deoxy-D-xylulose 5-phosphate: step 6/6. Functionally, catalyzes the conversion of 1-hydroxy-2-methyl-2-(E)-butenyl 4-diphosphate (HMBPP) into a mixture of isopentenyl diphosphate (IPP) and dimethylallyl diphosphate (DMAPP). Acts in the terminal step of the DOXP/MEP pathway for isoprenoid precursor biosynthesis. The sequence is that of 4-hydroxy-3-methylbut-2-enyl diphosphate reductase from Thermosynechococcus vestitus (strain NIES-2133 / IAM M-273 / BP-1).